Reading from the N-terminus, the 380-residue chain is Cytochrome b (380 aa).

4 consecutive transmembrane segments (helical) span residues 33 to 53 (FGSL…FLAM), 77 to 98 (WLIR…FIHV), 113 to 133 (WNIG…GYVL), and 178 to 198 (FFAF…VHLL). Heme b contacts are provided by His-83 and His-97. His-182 and His-196 together coordinate heme b. His-201 contacts a ubiquinone. The next 4 membrane-spanning stretches (helical) occupy residues 226–246 (IKDL…VLFF), 288–308 (LGGV…PLLN), 320–340 (ITQA…WIGG), and 347–367 (FTLI…IFMP).

It belongs to the cytochrome b family. As to quaternary structure, the cytochrome bc1 complex contains 11 subunits: 3 respiratory subunits (MT-CYB, CYC1 and UQCRFS1), 2 core proteins (UQCRC1 and UQCRC2) and 6 low-molecular weight proteins (UQCRH/QCR6, UQCRB/QCR7, UQCRQ/QCR8, UQCR10/QCR9, UQCR11/QCR10 and a cleavage product of UQCRFS1). This cytochrome bc1 complex then forms a dimer. Heme b is required as a cofactor.

It is found in the mitochondrion inner membrane. In terms of biological role, component of the ubiquinol-cytochrome c reductase complex (complex III or cytochrome b-c1 complex) that is part of the mitochondrial respiratory chain. The b-c1 complex mediates electron transfer from ubiquinol to cytochrome c. Contributes to the generation of a proton gradient across the mitochondrial membrane that is then used for ATP synthesis. This Rhipidomys wetzeli (Wetzel's climbing mouse) protein is Cytochrome b (MT-CYB).